The chain runs to 546 residues: Chaperonin GroEL 1 (546 aa).

ATP is bound by residues 30-33 (TLGP), Lys51, 87-91 (DGTTT), Gly415, 479-481 (NAA), and Asp495. Positions 526–546 (KEDAPMPGGMPGGMGGMGMDM) are disordered. Over residues 534–546 (GMPGGMGGMGMDM) the composition is skewed to gly residues.

This sequence belongs to the chaperonin (HSP60) family. Forms a cylinder of 14 subunits composed of two heptameric rings stacked back-to-back. Interacts with the co-chaperonin GroES.

The protein localises to the cytoplasm. It catalyses the reaction ATP + H2O + a folded polypeptide = ADP + phosphate + an unfolded polypeptide.. Its function is as follows. Together with its co-chaperonin GroES, plays an essential role in assisting protein folding. The GroEL-GroES system forms a nano-cage that allows encapsulation of the non-native substrate proteins and provides a physical environment optimized to promote and accelerate protein folding. In Burkholderia pseudomallei (strain K96243), this protein is Chaperonin GroEL 1.